Reading from the N-terminus, the 346-residue chain is UPF0283 membrane protein VP1870 (346 aa).

The tract at residues 1–30 (MSELKQKQIFSEKALEKEQQSDSPELTAQK) is disordered. Residues 21–30 (SDSPELTAQK) show a composition bias toward polar residues. Helical transmembrane passes span 73–93 (VFATFAGLVGWQAVDSVVTAV) and 98–118 (WLALGWVGFITAVASLGLGAI).

The protein belongs to the UPF0283 family.

The protein localises to the cell inner membrane. This chain is UPF0283 membrane protein VP1870, found in Vibrio parahaemolyticus serotype O3:K6 (strain RIMD 2210633).